A 309-amino-acid polypeptide reads, in one-letter code: Probable 2,4-dienoyl-CoA reductase decr-1.2 [(3E)-enoyl-CoA-producing] (309 aa).

NADP(+) contacts are provided by residues 28-60 (VLVT…RRME), 32-37 (GGGTGI), Arg-57, and Asp-83. Substrate is bound at residue Arg-57. Substrate contacts are provided by Phe-116 and Ser-124. The Proton acceptor role is filled by Tyr-166. NADP(+)-binding positions include Lys-181 and 207-210 (PGPI). Arg-218 is a substrate binding site.

This sequence belongs to the short-chain dehydrogenases/reductases (SDR) family. 2,4-dienoyl-CoA reductase subfamily.

The catalysed reaction is a (2E,4E)-dienoyl-CoA + NADPH + H(+) = a 4,5-saturated-(3E)-enoyl-CoA + NADP(+). It catalyses the reaction a (2E,4Z)-dienoyl-CoA + NADPH + H(+) = a 4,5-saturated-(3E)-enoyl-CoA + NADP(+). Auxiliary enzyme of beta-oxidation. It participates in the metabolism of unsaturated fatty enoyl-CoA esters having double bonds in both even- and odd-numbered positions. Catalyzes the NADP-dependent reduction of 2,4-dienoyl-CoA to yield trans-3-enoyl-CoA. The sequence is that of Probable 2,4-dienoyl-CoA reductase decr-1.2 [(3E)-enoyl-CoA-producing] from Caenorhabditis elegans.